We begin with the raw amino-acid sequence, 396 residues long: Probable sugar efflux transporter (396 aa).

The next 12 membrane-spanning stretches (helical) occupy residues Val-15–Leu-35, Val-50–Leu-70, Leu-81–Phe-101, Val-103–Ala-123, Ala-136–Leu-156, Phe-170–Leu-190, Pro-209–Tyr-229, Phe-246–Gly-266, Ala-275–Ala-295, Ile-299–Met-319, Val-333–Gly-353, and Met-364–Phe-384.

The protein belongs to the major facilitator superfamily. SotB (TC 2.A.1.2) family.

It is found in the cell inner membrane. Involved in the efflux of sugars. The physiological role may be the reduction of the intracellular concentration of toxic sugars or sugar metabolites. The protein is Probable sugar efflux transporter of Escherichia coli O6:K15:H31 (strain 536 / UPEC).